The following is a 36-amino-acid chain: Amanexitide proprotein 1 (36 aa).

A propeptide spanning residues 1–10 (MSDINTARLP) is cleaved from the precursor. The cyclopeptide (Val-Pro) cross-link spans 11-19 (VFSLPVFFP). The propeptide occupies 20–36 (FVSDDIQAVLTRGESLC).

The protein belongs to the MSDIN fungal toxin family. In terms of processing, processed by the macrocyclase-peptidase enzyme POPB to yield a toxic cyclic nonapeptide. POPB first removes 10 residues from the N-terminus. Conformational trapping of the remaining peptide forces the enzyme to release this intermediate rather than proceed to macrocyclization. The enzyme rebinds the remaining peptide in a different conformation and catalyzes macrocyclization of the N-terminal 9 residues. In terms of tissue distribution, expressed in basidiocarps.

Cyclic nonapeptide that belongs to the MSDIN-like toxin family responsible for a large number of food poisoning cases and deaths. The polypeptide is Amanexitide proprotein 1 (Amanita exitialis (Guangzhou destroying angel)).